A 380-amino-acid polypeptide reads, in one-letter code: GDP-mannose:cellobiosyl-diphosphopolyprenol alpha-mannosyltransferase (380 aa).

The protein belongs to the glycosyltransferase group 1 family. Glycosyltransferase 4 subfamily.

The catalysed reaction is beta-D-Glc-(1-&gt;4)-alpha-D-Glc-di-trans,octa-cis-undecaprenyl diphosphate + GDP-alpha-D-mannose = alpha-D-Man-(1-&gt;3)-beta-D-Glc-(1-&gt;4)-alpha-D-Glc-1-di-trans,octa-cis-undecaprenyl diphosphate + GDP + H(+). Involved in the biosynthesis of the exopolysaccharide xanthan, a polymer that is comprised of repeating pentasaccharide units with the structure of a beta-(1,4)-linked D-glucose backbone with trisaccharide side chains composed of mannose-beta-(1,4)-glucuronic acid-beta-(1,2)-mannose attached to alternate glucose residues in the backbone by alpha-(1,3) linkages. Xanthan is involved in pathogenicity but has also been used in a variety of applications as a specialty polymer for commercial applications, including food additives, where they act as viscosifying, stabilizing, emulsifying, or gelling agents. The chain is GDP-mannose:cellobiosyl-diphosphopolyprenol alpha-mannosyltransferase (gumH) from Xanthomonas oryzae pv. oryzae (strain PXO99A).